Consider the following 400-residue polypeptide: Elongation factor Tu (400 aa).

The tr-type G domain occupies 10-209; it reads KPHVNIGTIG…VVDKYIPTPQ (200 aa). A G1 region spans residues 19–26; that stretch reads GHVDHGKT. 19–26 contributes to the GTP binding site; it reads GHVDHGKT. Thr26 contributes to the Mg(2+) binding site. Positions 60-64 are G2; that stretch reads GITIN. Residues 81-84 form a G3 region; the sequence is DCPG. Residues 81 to 85 and 136 to 139 each bind GTP; these read DCPGH and NKVD. The interval 136-139 is G4; it reads NKVD. The segment at 174-176 is G5; the sequence is SAL.

This sequence belongs to the TRAFAC class translation factor GTPase superfamily. Classic translation factor GTPase family. EF-Tu/EF-1A subfamily. In terms of assembly, monomer.

The protein resides in the cytoplasm. It catalyses the reaction GTP + H2O = GDP + phosphate + H(+). GTP hydrolase that promotes the GTP-dependent binding of aminoacyl-tRNA to the A-site of ribosomes during protein biosynthesis. The protein is Elongation factor Tu of Caldicellulosiruptor saccharolyticus (strain ATCC 43494 / DSM 8903 / Tp8T 6331).